The chain runs to 49 residues: MADKSDLGYTGLTDEQAQELHSVYMSGLWPFSAVAIVAHLAVYIWRPWF.

Residues 2–27 lie on the Cytoplasmic side of the membrane; that stretch reads ADKSDLGYTGLTDEQAQELHSVYMSG. Residues histidine 21 and histidine 39 each contribute to the a bacteriochlorophyll site. Residues 28-45 form a helical; Signal-anchor for type II membrane protein membrane-spanning segment; that stretch reads LWPFSAVAIVAHLAVYIW. At 46–49 the chain is on the periplasmic side; that stretch reads RPWF.

It belongs to the antenna complex beta subunit family. In terms of assembly, the core complex is formed by different alpha and beta chains, binding bacteriochlorophyll molecules, and arranged most probably in tetrameric structures disposed around the reaction center. The non-pigmented gamma chains may constitute additional components.

It localises to the cell inner membrane. Its function is as follows. Antenna complexes are light-harvesting systems, which transfer the excitation energy to the reaction centers. The protein is Light-harvesting protein B-875 beta chain (pufB) of Cereibacter sphaeroides (Rhodobacter sphaeroides).